A 226-amino-acid chain; its full sequence is Enolase-phosphatase E1 (226 aa).

Residues Asp9 and Glu11 each contribute to the Mg(2+) site. Substrate-binding positions include 115–116 (SS) and Lys160. Position 185 (Asp185) interacts with Mg(2+).

Belongs to the HAD-like hydrolase superfamily. MasA/MtnC family. As to quaternary structure, monomer. It depends on Mg(2+) as a cofactor.

Its subcellular location is the cytoplasm. The protein resides in the nucleus. It carries out the reaction 5-methylsulfanyl-2,3-dioxopentyl phosphate + H2O = 1,2-dihydroxy-5-(methylsulfanyl)pent-1-en-3-one + phosphate. The protein operates within amino-acid biosynthesis; L-methionine biosynthesis via salvage pathway; L-methionine from S-methyl-5-thio-alpha-D-ribose 1-phosphate: step 3/6. It participates in amino-acid biosynthesis; L-methionine biosynthesis via salvage pathway; L-methionine from S-methyl-5-thio-alpha-D-ribose 1-phosphate: step 4/6. Functionally, bifunctional enzyme that catalyzes the enolization of 2,3-diketo-5-methylthiopentyl-1-phosphate (DK-MTP-1-P) into the intermediate 2-hydroxy-3-keto-5-methylthiopentenyl-1-phosphate (HK-MTPenyl-1-P), which is then dephosphorylated to form the acireductone 1,2-dihydroxy-3-keto-5-methylthiopentene (DHK-MTPene). The chain is Enolase-phosphatase E1 from Zygosaccharomyces rouxii (strain ATCC 2623 / CBS 732 / NBRC 1130 / NCYC 568 / NRRL Y-229).